The following is a 53-amino-acid chain: IgA-inducing protein homolog (53 aa).

The first 30 residues, 1 to 30 (MCSYYHMKKRSVSGCNITIFAVMFSHLSAG), serve as a signal peptide directing secretion.

It localises to the secreted. Functionally, enhances IgA secretion from B-cells stimulated via CD40. This chain is IgA-inducing protein homolog (IGIP), found in Homo sapiens (Human).